Reading from the N-terminus, the 313-residue chain is tRNA dimethylallyltransferase (313 aa).

12–19 (GPTASGKS) contacts ATP. 14-19 (TASGKS) lines the substrate pocket. 2 interaction with substrate tRNA regions span residues 37–40 (DSMQ) and 161–165 (QRSIR).

It belongs to the IPP transferase family. As to quaternary structure, monomer. Mg(2+) serves as cofactor.

It carries out the reaction adenosine(37) in tRNA + dimethylallyl diphosphate = N(6)-dimethylallyladenosine(37) in tRNA + diphosphate. In terms of biological role, catalyzes the transfer of a dimethylallyl group onto the adenine at position 37 in tRNAs that read codons beginning with uridine, leading to the formation of N6-(dimethylallyl)adenosine (i(6)A). This Pelagibacter ubique (strain HTCC1062) protein is tRNA dimethylallyltransferase.